A 502-amino-acid polypeptide reads, in one-letter code: ATP synthase subunit alpha (502 aa).

ATP is bound at residue 169–176 (GDRQTGKT).

It belongs to the ATPase alpha/beta chains family. In terms of assembly, F-type ATPases have 2 components, CF(1) - the catalytic core - and CF(0) - the membrane proton channel. CF(1) has five subunits: alpha(3), beta(3), gamma(1), delta(1), epsilon(1). CF(0) has three main subunits: a(1), b(2) and c(9-12). The alpha and beta chains form an alternating ring which encloses part of the gamma chain. CF(1) is attached to CF(0) by a central stalk formed by the gamma and epsilon chains, while a peripheral stalk is formed by the delta and b chains.

The protein localises to the cell membrane. The enzyme catalyses ATP + H2O + 4 H(+)(in) = ADP + phosphate + 5 H(+)(out). In terms of biological role, produces ATP from ADP in the presence of a proton gradient across the membrane. The alpha chain is a regulatory subunit. This chain is ATP synthase subunit alpha, found in Staphylococcus aureus (strain bovine RF122 / ET3-1).